The sequence spans 566 residues: CTP synthase (566 aa).

Residues 1 to 265 (MTKYVFVTGG…DEIVCHKLNL (265 aa)) form an amidoligase domain region. Position 13 (serine 13) interacts with CTP. Serine 13 serves as a coordination point for UTP. Residues 14–19 (SLGKGI) and aspartate 71 each bind ATP. Aspartate 71 and glutamate 139 together coordinate Mg(2+). CTP-binding positions include 146-148 (DIE), 186-191 (KTKPTQ), and lysine 222. UTP is bound by residues 186–191 (KTKPTQ) and lysine 222. The 254-residue stretch at 290–543 (EIALVGKYVD…IEAAAVFADK (254 aa)) folds into the Glutamine amidotransferase type-1 domain. Glycine 351 is a binding site for L-glutamine. The active-site Nucleophile; for glutamine hydrolysis is the cysteine 378. L-glutamine-binding positions include 379-382 (LGMQ), glutamate 402, and arginine 469. Active-site residues include histidine 516 and glutamate 518. The tract at residues 545–566 (PSSEGAISADKPERTTTGAYIQ) is disordered.

This sequence belongs to the CTP synthase family. Homotetramer.

The catalysed reaction is UTP + L-glutamine + ATP + H2O = CTP + L-glutamate + ADP + phosphate + 2 H(+). It catalyses the reaction L-glutamine + H2O = L-glutamate + NH4(+). It carries out the reaction UTP + NH4(+) + ATP = CTP + ADP + phosphate + 2 H(+). It functions in the pathway pyrimidine metabolism; CTP biosynthesis via de novo pathway; CTP from UDP: step 2/2. Its activity is regulated as follows. Allosterically activated by GTP, when glutamine is the substrate; GTP has no effect on the reaction when ammonia is the substrate. The allosteric effector GTP functions by stabilizing the protein conformation that binds the tetrahedral intermediate(s) formed during glutamine hydrolysis. Inhibited by the product CTP, via allosteric rather than competitive inhibition. In terms of biological role, catalyzes the ATP-dependent amination of UTP to CTP with either L-glutamine or ammonia as the source of nitrogen. Regulates intracellular CTP levels through interactions with the four ribonucleotide triphosphates. In Nitrosospira multiformis (strain ATCC 25196 / NCIMB 11849 / C 71), this protein is CTP synthase.